A 265-amino-acid chain; its full sequence is 4-hydroxy-tetrahydrodipicolinate reductase (265 aa).

NAD(+) is bound by residues 7 to 12, D33, 96 to 98, and 120 to 123; these read GASGRM, GTT, and AANM. H153 acts as the Proton donor/acceptor in catalysis. Residue H154 coordinates (S)-2,3,4,5-tetrahydrodipicolinate. K157 functions as the Proton donor in the catalytic mechanism. 163-164 lines the (S)-2,3,4,5-tetrahydrodipicolinate pocket; it reads GT.

It belongs to the DapB family.

Its subcellular location is the cytoplasm. The enzyme catalyses (S)-2,3,4,5-tetrahydrodipicolinate + NAD(+) + H2O = (2S,4S)-4-hydroxy-2,3,4,5-tetrahydrodipicolinate + NADH + H(+). The catalysed reaction is (S)-2,3,4,5-tetrahydrodipicolinate + NADP(+) + H2O = (2S,4S)-4-hydroxy-2,3,4,5-tetrahydrodipicolinate + NADPH + H(+). It functions in the pathway amino-acid biosynthesis; L-lysine biosynthesis via DAP pathway; (S)-tetrahydrodipicolinate from L-aspartate: step 4/4. In terms of biological role, catalyzes the conversion of 4-hydroxy-tetrahydrodipicolinate (HTPA) to tetrahydrodipicolinate. The sequence is that of 4-hydroxy-tetrahydrodipicolinate reductase from Cupriavidus pinatubonensis (strain JMP 134 / LMG 1197) (Cupriavidus necator (strain JMP 134)).